The chain runs to 771 residues: Probable dipeptidyl peptidase 4 (771 aa).

The signal sequence occupies residues M1 to A16. N-linked (GlcNAc...) asparagine glycans are attached at residues N37, N80, N114, N173, N222, N470, and N495. Active-site charge relay system residues include S618, D695, and H730.

Belongs to the peptidase S9B family.

The protein resides in the secreted. It catalyses the reaction Release of an N-terminal dipeptide, Xaa-Yaa-|-Zaa-, from a polypeptide, preferentially when Yaa is Pro, provided Zaa is neither Pro nor hydroxyproline.. Functionally, extracellular dipeptidyl-peptidase which removes N-terminal dipeptides sequentially from polypeptides having unsubstituted N-termini provided that the penultimate residue is proline. The sequence is that of Probable dipeptidyl peptidase 4 (dpp4) from Aspergillus flavus (strain ATCC 200026 / FGSC A1120 / IAM 13836 / NRRL 3357 / JCM 12722 / SRRC 167).